Consider the following 223-residue polypeptide: Fibroblast growth factor-binding protein 2 (223 aa).

The N-terminal stretch at 1–19 (MKFVPCLLLVTLSCLGTLG) is a signal peptide. The interval 23–45 (RQKQGSTGEEFHFQTGGRDSCTM) is disordered. Disulfide bonds link cysteine 43-cysteine 63, cysteine 72-cysteine 106, and cysteine 81-cysteine 117. A disordered region spans residues 120–201 (AGPQAHMQQV…PGGNEEAKKK (82 aa)). The segment covering 125-144 (HMQQVTSSLKGSPEPNQQPE) has biased composition (polar residues). Residues 175–186 (AKPTTRPTAKPT) show a composition bias toward low complexity. Cysteine 206 and cysteine 214 are joined by a disulfide.

Belongs to the fibroblast growth factor-binding protein family. As to expression, expressed in serum, peripheral leukocytes and cytotoxic T-lymphocytes, but not in granulocytes and monocytes (at protein level).

It localises to the secreted. The protein localises to the extracellular space. This Homo sapiens (Human) protein is Fibroblast growth factor-binding protein 2 (FGFBP2).